Here is a 479-residue protein sequence, read N- to C-terminus: Heparin cofactor 2 (479 aa).

A signal peptide spans 1–23 (MKHPAYTLLLSLIMSMCAGSKGL). A glycan (N-linked (GlcNAc...) asparagine) is linked at asparagine 31. 2 repeat units span residues 55-65 (GEEDDDYLDLE) and 69-79 (SEDDDYIYVVD). The 2 X 11 AA approximate repeats, Asp/Glu-rich (acidic) (hirudin-like) stretch occupies residues 55–79 (GEEDDDYLDLEKLLSEDDDYIYVVD). A sulfotyrosine mark is found at tyrosine 61 and tyrosine 74. The N-linked (GlcNAc...) asparagine glycan is linked to asparagine 168. The glycosaminoglycan-binding site stretch occupies residues 172–192 (KYEVTTIHNLFRKLTHRLFRR). N-linked (GlcNAc...) asparagine glycans are attached at residues asparagine 367 and asparagine 403.

It belongs to the serpin family. Different composition of the N-linked oligosaccharides appears to yield a 68-kDa and a 72-kDa form.

Functionally, thrombin inhibitor activated by the glycosaminoglycans, heparin or dermatan sulfate. In the presence of the latter, HC-II becomes the predominant thrombin inhibitor in place of antithrombin III (AT). This Rattus norvegicus (Rat) protein is Heparin cofactor 2 (Serpind1).